The primary structure comprises 896 residues: Valine--tRNA ligase (896 aa).

The 'HIGH' region motif lies at P43–H53. A 'KMSKS' region motif is present at residues K545–S549. An ATP-binding site is contributed by K548. The stretch at D831–L857 forms a coiled coil.

It belongs to the class-I aminoacyl-tRNA synthetase family. ValS type 1 subfamily. Monomer.

The protein resides in the cytoplasm. It catalyses the reaction tRNA(Val) + L-valine + ATP = L-valyl-tRNA(Val) + AMP + diphosphate. Functionally, catalyzes the attachment of valine to tRNA(Val). As ValRS can inadvertently accommodate and process structurally similar amino acids such as threonine, to avoid such errors, it has a 'posttransfer' editing activity that hydrolyzes mischarged Thr-tRNA(Val) in a tRNA-dependent manner. This chain is Valine--tRNA ligase, found in Rhizorhabdus wittichii (strain DSM 6014 / CCUG 31198 / JCM 15750 / NBRC 105917 / EY 4224 / RW1) (Sphingomonas wittichii).